The primary structure comprises 330 residues: Ketol-acid reductoisomerase (NADP(+)) (330 aa).

One can recognise a KARI N-terminal Rossmann domain in the interval 1 to 182 (MKKVYYDQDA…GCTRAGVFET (182 aa)). Residues 25 to 28 (YGSQ), Ser-51, Ser-53, and 83 to 86 (DQIQ) contribute to the NADP(+) site. The active site involves His-108. Position 134 (Gly-134) interacts with NADP(+). In terms of domain architecture, KARI C-terminal knotted spans 183-328 (TFKEETETDL…AELRQMMPWL (146 aa)). The Mg(2+) site is built by Asp-191, Glu-195, Glu-227, and Glu-231. Position 252 (Ser-252) interacts with substrate.

This sequence belongs to the ketol-acid reductoisomerase family. It depends on Mg(2+) as a cofactor.

The catalysed reaction is (2R)-2,3-dihydroxy-3-methylbutanoate + NADP(+) = (2S)-2-acetolactate + NADPH + H(+). It catalyses the reaction (2R,3R)-2,3-dihydroxy-3-methylpentanoate + NADP(+) = (S)-2-ethyl-2-hydroxy-3-oxobutanoate + NADPH + H(+). Its pathway is amino-acid biosynthesis; L-isoleucine biosynthesis; L-isoleucine from 2-oxobutanoate: step 2/4. It functions in the pathway amino-acid biosynthesis; L-valine biosynthesis; L-valine from pyruvate: step 2/4. Its function is as follows. Involved in the biosynthesis of branched-chain amino acids (BCAA). Catalyzes an alkyl-migration followed by a ketol-acid reduction of (S)-2-acetolactate (S2AL) to yield (R)-2,3-dihydroxy-isovalerate. In the isomerase reaction, S2AL is rearranged via a Mg-dependent methyl migration to produce 3-hydroxy-3-methyl-2-ketobutyrate (HMKB). In the reductase reaction, this 2-ketoacid undergoes a metal-dependent reduction by NADPH to yield (R)-2,3-dihydroxy-isovalerate. This Carboxydothermus hydrogenoformans (strain ATCC BAA-161 / DSM 6008 / Z-2901) protein is Ketol-acid reductoisomerase (NADP(+)).